Reading from the N-terminus, the 494-residue chain is Glutamate decarboxylase 5 (494 aa).

An N6-(pyridoxal phosphate)lysine modification is found at lysine 276.

The protein belongs to the group II decarboxylase family. In terms of assembly, homohexamer. Interacts with calmodulin. Pyridoxal 5'-phosphate serves as cofactor. In terms of tissue distribution, expressed in flowers.

The enzyme catalyses L-glutamate + H(+) = 4-aminobutanoate + CO2. In terms of biological role, catalyzes the production of GABA. The calmodulin-binding is calcium-dependent and it is proposed that this may, directly or indirectly, form a calcium regulated control of GABA biosynthesis. This chain is Glutamate decarboxylase 5 (GAD5), found in Arabidopsis thaliana (Mouse-ear cress).